A 292-amino-acid polypeptide reads, in one-letter code: 4-hydroxy-tetrahydrodipicolinate synthase (292 aa).

Pyruvate is bound at residue T45. Y133 (proton donor/acceptor) is an active-site residue. Catalysis depends on K161, which acts as the Schiff-base intermediate with substrate. A pyruvate-binding site is contributed by I203.

It belongs to the DapA family. As to quaternary structure, homodimer.

The protein resides in the cytoplasm. It carries out the reaction L-aspartate 4-semialdehyde + pyruvate = (2S,4S)-4-hydroxy-2,3,4,5-tetrahydrodipicolinate + H2O + H(+). Its pathway is amino-acid biosynthesis; L-lysine biosynthesis via DAP pathway; (S)-tetrahydrodipicolinate from L-aspartate: step 3/4. Catalyzes the condensation of (S)-aspartate-beta-semialdehyde [(S)-ASA] and pyruvate to 4-hydroxy-tetrahydrodipicolinate (HTPA). The chain is 4-hydroxy-tetrahydrodipicolinate synthase from Ectopseudomonas mendocina (strain ymp) (Pseudomonas mendocina).